A 606-amino-acid chain; its full sequence is Pentatricopeptide repeat-containing protein At1g31920 (606 aa).

PPR repeat units lie at residues 96–130, 131–165, 166–200, 201–227, 233–263, 268–298, 299–333, 334–368, and 370–404; these read CTFD…GNEP, DNFT…GLEA, DVFV…TAAS, WSSM…MCSE, EESG…LLRN, NIIV…MEKR, NNLT…GLEP, DHVV…GKVE, and TAEH…KNDV. A type E motif region spans residues 405-480; that stretch reads IWRTFLSQCR…TPGFSIVELK (76 aa). A type E(+) motif region spans residues 481–511; the sequence is GKTHRFVSQDRSHPKCKEIYKMLHQMEWQLK. The interval 512–606 is type DYW motif; that stretch reads FEGYSPDLTQ…GGTCSCKDYW (95 aa).

This sequence belongs to the PPR family. PCMP-H subfamily.

The polypeptide is Pentatricopeptide repeat-containing protein At1g31920 (PCMP-H11) (Arabidopsis thaliana (Mouse-ear cress)).